Reading from the N-terminus, the 1140-residue chain is Condensin-2 complex subunit G2 (1140 aa).

One copy of the HEAT repeat lies at 460–493 (LLPALKSSLHDSSEKVRVAFVGMLLKIKAARAAK).

In terms of assembly, component of the condensin-2 complex, which contains the smc2 and smc4 heterodimer, and three non SMC subunits that probably regulate the complex: ncaph2, ncapd3 and ncapg2.

It localises to the nucleus. In terms of biological role, regulatory subunit of the condensin-2 complex, a complex which establishes mitotic chromosome architecture and is involved in physical rigidity of the chromatid axis. Plays a role in the embryonic development of the head and kidney structures. The polypeptide is Condensin-2 complex subunit G2 (Danio rerio (Zebrafish)).